Here is a 176-residue protein sequence, read N- to C-terminus: ATP-dependent protease subunit HslV (176 aa).

Residue Thr5 is part of the active site. Ser161, Cys164, and Thr167 together coordinate Na(+).

Belongs to the peptidase T1B family. HslV subfamily. As to quaternary structure, a double ring-shaped homohexamer of HslV is capped on each side by a ring-shaped HslU homohexamer. The assembly of the HslU/HslV complex is dependent on binding of ATP.

The protein resides in the cytoplasm. The catalysed reaction is ATP-dependent cleavage of peptide bonds with broad specificity.. Allosterically activated by HslU binding. In terms of biological role, protease subunit of a proteasome-like degradation complex believed to be a general protein degrading machinery. The sequence is that of ATP-dependent protease subunit HslV from Thermoanaerobacter sp. (strain X514).